The following is an 870-amino-acid chain: DNA mismatch repair protein MutS (870 aa).

616–623 (GPNMAGKS) serves as a coordination point for ATP.

The protein belongs to the DNA mismatch repair MutS family.

In terms of biological role, this protein is involved in the repair of mismatches in DNA. It is possible that it carries out the mismatch recognition step. This protein has a weak ATPase activity. This chain is DNA mismatch repair protein MutS, found in Parabacteroides distasonis (strain ATCC 8503 / DSM 20701 / CIP 104284 / JCM 5825 / NCTC 11152).